The following is a 336-amino-acid chain: Terephthalate 1,2-dioxygenase, reductase component 1 (336 aa).

In terms of domain architecture, 2Fe-2S ferredoxin-type spans 3–91 (HQIHIHDSDI…DIRIQPSSFR (89 aa)). The [2Fe-2S] cluster site is built by Cys-37, Cys-42, Cys-45, and Cys-75. Residues 98–197 (RKRFTAKVYS…ELPFGSIALK (100 aa)) enclose the FAD-binding FR-type domain.

Monomer. Part of a multicomponent enzyme system composed of a reductase (TphA1I or TphA1II) and a two-subunit oxygenase component (TphA2I or TphA2II and TphA3I or TphA3II). FAD serves as cofactor. [2Fe-2S] cluster is required as a cofactor.

The catalysed reaction is terephthalate + NADH + O2 + H(+) = (3S,4R)-3,4-dihydroxycyclohexa-1,5-diene-1,4-dicarboxylate + NAD(+). Its function is as follows. Component of the terephthalate 1,2-dioxygenase multicomponent enzyme system which catalyzes the dioxygenation of terephthalate (TER/TPA) to 1,2-dihydroxy-3,5-cyclohexadiene-1,4-dicarboxylic acid (DCD). TphA1 probably reduces TphA2A3. It can also use 2,5-dicarboxypyridine (PDC) and 1,4-napthalenedicarboxylic acid (NDC) as substrates, and preferentially uses NADPH which is the physiological electron donor. The polypeptide is Terephthalate 1,2-dioxygenase, reductase component 1 (tphA1I) (Comamonas sp).